The following is a 415-amino-acid chain: Plasminogen activator inhibitor 2, macrophage (415 aa).

N-linked (GlcNAc...) asparagine glycosylation is found at asparagine 23, asparagine 75, asparagine 261, and asparagine 339.

It belongs to the serpin family. Ov-serpin subfamily. As to quaternary structure, interacts with PSMB1. Post-translationally, the signal sequence is not cleaved.

The protein localises to the cytoplasm. It localises to the secreted. Its subcellular location is the extracellular space. Functionally, inhibits urokinase-type plasminogen activator. The monocyte derived PAI-2 is distinct from the endothelial cell-derived PAI-1. Not required for normal murine development or survival. The polypeptide is Plasminogen activator inhibitor 2, macrophage (Serpinb2) (Mus musculus (Mouse)).